We begin with the raw amino-acid sequence, 102 residues long: MSLFKILVAAATVATALAAPHEHKKPHPSYGDANAQCGNHQKLSCCNRGDSGGVLDGLLGGNCQPINILALLPIQNQCTNQVACCTGNSNGLINIPCTNVNL.

The first 18 residues, 1–18 (MSLFKILVAAATVATALA), serve as a signal peptide directing secretion. Cystine bridges form between Cys37–Cys84, Cys45–Cys78, Cys46–Cys63, and Cys85–Cys97.

Belongs to the fungal hydrophobin family.

The protein localises to the secreted. Its subcellular location is the cell wall. Functionally, aerial growth, conidiation, and dispersal of filamentous fungi in the environment rely upon a capability of their secreting small amphipathic proteins called hydrophobins (HPBs) with low sequence identity. Class I can self-assemble into an outermost layer of rodlet bundles on aerial cell surfaces, conferring cellular hydrophobicity that supports fungal growth, development and dispersal; whereas Class II form highly ordered films at water-air interfaces through intermolecular interactions but contribute nothing to the rodlet structure. Hyd1 is essential for stress tolerance, conidial hydrophobicity, adhesion to insect cuticle, and insect infectivity/pathogenicity. Plays a neglectable role in hyphal growth and asexual development. The polypeptide is Class I hydrophobin 1 (Metarhizium robertsii (strain ARSEF 23 / ATCC MYA-3075) (Metarhizium anisopliae (strain ARSEF 23))).